Reading from the N-terminus, the 484-residue chain is MEIISLNVVPQCSVVTWSSKLATKRLVPNRSSLLFSGVKKSRLVIRSGNSDGYVVGENDDLGRIARRGESTSKVLIPGLPDESNGEIAARISHSHCEWKPKLRVHYEKAGCDNLDAPAVLFLPGFGVGSFHYEKQLTDLGRDYRVWAIDFLGQGLSLPTEDPTTMTEETSSSEDKEPFWGFGDKTEPWADQLVFSLDLWRDQVQYFVEEVIGEPVYIAGNSLGGYVALYFAATHPHLVKGVTLLNATPFWGFFPNPVRSPKLARLFPWPGAFPLPERVKKITELVWQKISDPESIAEILKQVYTDHSINVDKVFSRIVEVTQHPAAAASFASIMLAPGGELSFSEALSRCKENNVQICLMYGREDPWVRPLWGKKIKKEIPNAPYYEISPAGHCPHDEVPEVVNYLMRGWIKHLESGGFEALPLLEDTEEDWEESRIGREIEFPRDGWKKAVNLWLYGSNYTYWRGVRESFRSSFIRVFGGKSA.

The N-terminal 47 residues, 1–47 (MEIISLNVVPQCSVVTWSSKLATKRLVPNRSSLLFSGVKKSRLVIRS), are a transit peptide targeting the chloroplast.

The protein belongs to the AB hydrolase superfamily. In terms of assembly, interacts with HCAR, RCCR, PAO and the LHCII complex. Part of a SGR1-CCE-LHCII complex, which acts in chlorophyll breakdown.

Its subcellular location is the plastid. It is found in the chloroplast thylakoid membrane. The protein resides in the chloroplast stroma. Functionally, alpha/beta hydrolase dephytylating specifically the Mg-free chlorophyll pigment (pheophytin), yielding pheophorbide. No activity on chlorophyll. Belongs to the chlorophyll catabolic enzymes (CCEs). This is Pheophytinase, chloroplastic (PPH) from Arabidopsis thaliana (Mouse-ear cress).